Here is a 219-residue protein sequence, read N- to C-terminus: Vesicle-associated membrane protein 712 (219 aa).

At 1–189 (MSILYALVAR…NNTVWWRNCK (189 aa)) the chain is on the cytoplasmic side. The Longin domain maps to 7-111 (LVARGTVVLA…AMNDEFSRVL (105 aa)). Residues 126–186 (TISRIKGEMN…RRFNNTVWWR (61 aa)) enclose the v-SNARE coiled-coil homology domain. Residues 190 to 210 (LTLLLILVLLVIIYIGVAFAC) traverse the membrane as a helical; Anchor for type IV membrane protein segment. Residues 211–219 (HGPTLPSCV) are Vesicular-facing.

It belongs to the synaptobrevin family. As to expression, expressed in flowers, leaves, stems and roots.

It is found in the vacuole membrane. The protein resides in the prevacuolar compartment membrane. Its function is as follows. Involved in the targeting and/or fusion of transport vesicles to their target membrane. The sequence is that of Vesicle-associated membrane protein 712 from Arabidopsis thaliana (Mouse-ear cress).